A 417-amino-acid polypeptide reads, in one-letter code: Gamma-glutamyl phosphate reductase (417 aa).

It belongs to the gamma-glutamyl phosphate reductase family.

Its subcellular location is the cytoplasm. It catalyses the reaction L-glutamate 5-semialdehyde + phosphate + NADP(+) = L-glutamyl 5-phosphate + NADPH + H(+). It participates in amino-acid biosynthesis; L-proline biosynthesis; L-glutamate 5-semialdehyde from L-glutamate: step 2/2. Its function is as follows. Catalyzes the NADPH-dependent reduction of L-glutamate 5-phosphate into L-glutamate 5-semialdehyde and phosphate. The product spontaneously undergoes cyclization to form 1-pyrroline-5-carboxylate. The polypeptide is Gamma-glutamyl phosphate reductase (Streptococcus agalactiae serotype III (strain NEM316)).